We begin with the raw amino-acid sequence, 114 residues long: UPF0145 protein PYRAB04900 (114 aa).

The protein belongs to the UPF0145 family.

The polypeptide is UPF0145 protein PYRAB04900 (Pyrococcus abyssi (strain GE5 / Orsay)).